We begin with the raw amino-acid sequence, 222 residues long: WAP four-disulfide core domain protein 1 (222 aa).

A signal peptide spans 1–32 (MDSRMLSDQRFCRRIFAAALCVLVLLADSGCA). Residues 61-110 (HYQKNDRCPPPPQTLPDRACEVPSCRSDSECERHKRCCYNGCIYACLESV) enclose the WAP domain. 4 disulfides stabilise this stretch: C68-C98, C80-C102, C85-C97, and C91-C106.

The protein localises to the secreted. In terms of biological role, has growth inhibitory activity. This Gallus gallus (Chicken) protein is WAP four-disulfide core domain protein 1 (WFDC1).